A 38-amino-acid chain; its full sequence is Photosystem I reaction center subunit IX (38 aa).

The chain crosses the membrane as a helical span at residues 4 to 24 (FLTTAPVVAAIWFTATAGILI).

Belongs to the PsaJ family.

The protein localises to the cellular thylakoid membrane. Functionally, may help in the organization of the PsaE and PsaF subunits. The polypeptide is Photosystem I reaction center subunit IX (Synechococcus sp. (strain CC9902)).